The sequence spans 609 residues: Protein kinase PVPK-1 (609 aa).

The segment covering 1–19 (MESSVNGVDSLSEVQNSVS) has biased composition (polar residues). 2 disordered regions span residues 1–51 (MESS…GHQT) and 80–100 (PTKLSSKQPPLDDSKGCEPNG). Residues 229–565 (FRLLKKLGCG…ATEIKQHPFF (337 aa)) form the Protein kinase domain. ATP contacts are provided by residues 235-243 (LGCGDIGSV) and Lys258. Asp354 serves as the catalytic Proton acceptor. The tract at residues 429–448 (GKSKKDKKSKPKNDMHNQVT) is disordered.

The protein belongs to the protein kinase superfamily. Ser/Thr protein kinase family.

The enzyme catalyses L-seryl-[protein] + ATP = O-phospho-L-seryl-[protein] + ADP + H(+). It catalyses the reaction L-threonyl-[protein] + ATP = O-phospho-L-threonyl-[protein] + ADP + H(+). The polypeptide is Protein kinase PVPK-1 (Phaseolus vulgaris (Kidney bean)).